A 101-amino-acid chain; its full sequence is MASSKTFFLLFALLFALALLVSTEAAASEESTKTGSVEGVKDAVCHHGCCRWFHHRCVRCCRSAEEVSVSDTENNAAADAHCRHGCCRWFHGRCIRCCPSA.

The 1; approximate repeat unit spans residues D42–A64. Residues D42 to A101 form a 2 X approximate repeats region. One copy of the 2; approximate repeat lies at D79–A101.

Belongs to the GRP family.

Its function is as follows. May be involved in the control of the cell cycle at the G1/S start transition. The polypeptide is CYC02 protein (CYC02) (Catharanthus roseus (Madagascar periwinkle)).